We begin with the raw amino-acid sequence, 126 residues long: Small ribosomal subunit protein uS8 (126 aa).

Belongs to the universal ribosomal protein uS8 family. As to quaternary structure, part of the 30S ribosomal subunit. Contacts proteins S5 and S12.

In terms of biological role, one of the primary rRNA binding proteins, it binds directly to 16S rRNA central domain where it helps coordinate assembly of the platform of the 30S subunit. The chain is Small ribosomal subunit protein uS8 from Oleidesulfovibrio alaskensis (strain ATCC BAA-1058 / DSM 17464 / G20) (Desulfovibrio alaskensis).